The sequence spans 73 residues: Neurogranin (73 aa).

In terms of domain architecture, IQ spans 26-55; that stretch reads ANAAAAKIQASFRGHMTRKKIKGGEIDRKT. At Ser36 the chain carries Phosphoserine; by PKC. The segment covering 47–59 has biased composition (basic and acidic residues); the sequence is KGGEIDRKTKDAE. The segment at 47-73 is disordered; the sequence is KGGEIDRKTKDAECANSTRGGDLRNGD.

The protein belongs to the neurogranin family.

Acts as a 'third messenger' substrate of protein kinase C-mediated molecular cascades during synaptic development and remodeling. Binds to calmodulin in the absence of calcium. The protein is Neurogranin (NRGN) of Serinus canaria (Island canary).